Consider the following 101-residue polypeptide: Histone H1-like protein EM6 (101 aa).

Basic residues-rich tracts occupy residues 1-35 (AKKRSRSRKRSASRKRSRSRKRSASKKSSKKHVRK) and 58-101 (AKKK…RRRR). Positions 1–101 (AKKRSRSRKR…SRTARSRRRR (101 aa)) are disordered. Tandem repeats lie at residues 3 to 4 (KR), 5 to 6 (SR), 7 to 8 (SR), and 9 to 10 (KR). A 10 X 2 AA approximate tandem repeats of [SK]-R region spans residues 3–22 (KRSRSRKRSASRKRSRSRKR). The 5; approximate repeat unit spans residues 11–12 (SA). A run of 5 repeats spans residues 13 to 14 (SR), 15 to 16 (KR), 17 to 18 (SR), 19 to 20 (SR), and 21 to 22 (KR). Residues 32–65 (HVRKALAAGMKNHLLAHPKGSNNFILAKKKAPRR) form a globular region.

In terms of tissue distribution, sperm.

It is found in the nucleus. Its subcellular location is the chromosome. This chain is Histone H1-like protein EM6, found in Ensis minor (Razor shell).